The chain runs to 279 residues: Phosphonates import ATP-binding protein PhnC (279 aa).

The region spanning 2–245 (FQLKNVTRQF…AVAAIYGAET (244 aa)) is the ABC transporter domain. 34–41 (GRSGAGKS) serves as a coordination point for ATP.

This sequence belongs to the ABC transporter superfamily. Phosphonates importer (TC 3.A.1.9.1) family. In terms of assembly, the complex is composed of two ATP-binding proteins (PhnC), two transmembrane proteins (PhnE) and a solute-binding protein (PhnD).

It is found in the cell inner membrane. The enzyme catalyses phosphonate(out) + ATP + H2O = phosphonate(in) + ADP + phosphate + H(+). Its function is as follows. Part of the ABC transporter complex PhnCDE involved in phosphonates import. Responsible for energy coupling to the transport system. In Rhizobium meliloti (strain 1021) (Ensifer meliloti), this protein is Phosphonates import ATP-binding protein PhnC.